The sequence spans 427 residues: 3-phosphoshikimate 1-carboxyvinyltransferase (427 aa).

K22, S23, and R27 together coordinate 3-phosphoshikimate. K22 serves as a coordination point for phosphoenolpyruvate. Positions 96 and 124 each coordinate phosphoenolpyruvate. Residues S169, S170, Q171, S197, D313, N336, and K340 each contribute to the 3-phosphoshikimate site. A phosphoenolpyruvate-binding site is contributed by Q171. Residue D313 is the Proton acceptor of the active site. Phosphoenolpyruvate-binding residues include R344, R386, and K411.

Belongs to the EPSP synthase family. Monomer.

Its subcellular location is the cytoplasm. It catalyses the reaction 3-phosphoshikimate + phosphoenolpyruvate = 5-O-(1-carboxyvinyl)-3-phosphoshikimate + phosphate. It participates in metabolic intermediate biosynthesis; chorismate biosynthesis; chorismate from D-erythrose 4-phosphate and phosphoenolpyruvate: step 6/7. Its function is as follows. Catalyzes the transfer of the enolpyruvyl moiety of phosphoenolpyruvate (PEP) to the 5-hydroxyl of shikimate-3-phosphate (S3P) to produce enolpyruvyl shikimate-3-phosphate and inorganic phosphate. This is 3-phosphoshikimate 1-carboxyvinyltransferase from Salmonella heidelberg (strain SL476).